The sequence spans 417 residues: Serine hydroxymethyltransferase (417 aa).

(6S)-5,6,7,8-tetrahydrofolate contacts are provided by residues L121 and 125 to 127; that span reads GHL. K229 is subject to N6-(pyridoxal phosphate)lysine. Residue 355–357 participates in (6S)-5,6,7,8-tetrahydrofolate binding; it reads SPF.

Belongs to the SHMT family. In terms of assembly, homodimer. The cofactor is pyridoxal 5'-phosphate.

The protein resides in the cytoplasm. The catalysed reaction is (6R)-5,10-methylene-5,6,7,8-tetrahydrofolate + glycine + H2O = (6S)-5,6,7,8-tetrahydrofolate + L-serine. Its pathway is one-carbon metabolism; tetrahydrofolate interconversion. It functions in the pathway amino-acid biosynthesis; glycine biosynthesis; glycine from L-serine: step 1/1. Functionally, catalyzes the reversible interconversion of serine and glycine with tetrahydrofolate (THF) serving as the one-carbon carrier. This reaction serves as the major source of one-carbon groups required for the biosynthesis of purines, thymidylate, methionine, and other important biomolecules. Also exhibits THF-independent aldolase activity toward beta-hydroxyamino acids, producing glycine and aldehydes, via a retro-aldol mechanism. In Citrobacter koseri (strain ATCC BAA-895 / CDC 4225-83 / SGSC4696), this protein is Serine hydroxymethyltransferase.